Reading from the N-terminus, the 807-residue chain is 85/88 kDa calcium-independent phospholipase A2 (807 aa).

Residue S13 is modified to Phosphoserine. ANK repeat units lie at residues 120–147, 151–181, 185–215, 219–248, 251–281, 286–312, 316–345, 349–378, and 382–403; these read WTVT…ANST, EGCT…QMDV, KGET…GLNQ, QGLT…RCNI, PGGF…QIHS, YGAS…DVDS, SGNT…NAGA, HGNT…EVDT, and FGET…KALL. The next 2 membrane-spanning stretches (helical) occupy residues 481 to 501 and 512 to 532; these read LLCL…LIAI and LFDW…ILHS. Residues 482 to 666 enclose the PNPLA domain; that stretch reads LCLDGGGVKG…LANNPTLDAM (185 aa). The GXGXXG signature appears at 486–491; the sequence is GGGVKG. The GXSXG motif lies at 518–522; sequence GTSTG. The Nucleophile role is filled by S520. D653 functions as the Proton acceptor in the catalytic mechanism. A DGA/G motif is present at residues 653-655; it reads DGG. Residues 678-687 form a calmodulin-binding (1-9-14 motif) region; the sequence is RKGQGNKVKK. Residues 749–760 are calmodulin-binding (IQ motif); that stretch reads AWCEMVGIQYFR.

As to quaternary structure, homodimer formed by catalytic domains tightly interacting through a large hydrophobic interface. The contact area involves 3 alpha helices, several loops and a part of the beta sheet from each monomer. Both active sites of the dimer are in close proximity adopting an open conformation that provide sufficient space for phospholipid access and favoring cooperativity in deacylation-reacylation reactions. Each monomer has 9 ankyrin repeats stacked side-by-side in an elongated structure oriented outwards from the catalytic core. In terms of tissue distribution, expressed in pancreatic beta-cells. Expressed in skeletal muscle (at protein level).

The protein localises to the cytoplasm. Its subcellular location is the cell membrane. It localises to the mitochondrion. The protein resides in the cell projection. It is found in the pseudopodium. The catalysed reaction is a 1,2-diacyl-sn-glycero-3-phosphocholine + H2O = a 1-acyl-sn-glycero-3-phosphocholine + a fatty acid + H(+). It carries out the reaction a 1-O-alkyl-2-acyl-sn-glycero-3-phosphocholine + H2O = a 1-O-alkyl-sn-glycero-3-phosphocholine + a fatty acid + H(+). It catalyses the reaction 1,2-dihexadecanoyl-sn-glycero-3-phosphocholine + H2O = 1-hexadecanoyl-sn-glycero-3-phosphocholine + hexadecanoate + H(+). The enzyme catalyses 1-hexadecanoyl-2-(9Z-octadecenoyl)-sn-glycero-3-phosphocholine + H2O = 1-hexadecanoyl-sn-glycero-3-phosphocholine + (9Z)-octadecenoate + H(+). The catalysed reaction is 1-hexadecanoyl-2-(9Z,12Z-octadecadienoyl)-sn-glycero-3-phosphocholine + H2O = (9Z,12Z)-octadecadienoate + 1-hexadecanoyl-sn-glycero-3-phosphocholine + H(+). It carries out the reaction 1-hexadecanoyl-2-(5Z,8Z,11Z,14Z-eicosatetraenoyl)-sn-glycero-3-phosphocholine + H2O = 1-hexadecanoyl-sn-glycero-3-phosphocholine + (5Z,8Z,11Z,14Z)-eicosatetraenoate + H(+). It catalyses the reaction 1-octadecanoyl-2-(5Z,8Z,11Z,14Z-eicosatetraenoyl)-sn-glycero-3-phosphocholine + H2O = 1-octadecanoyl-sn-glycero-3-phosphocholine + (5Z,8Z,11Z,14Z)-eicosatetraenoate + H(+). The enzyme catalyses 1-hexadecanoyl-2-(5Z,8Z,11Z,14Z-eicosatetraenoyl)-sn-glycero-3-phosphoethanolamine + H2O = 1-hexadecanoyl-sn-glycero-3-phosphoethanolamine + (5Z,8Z,11Z,14Z)-eicosatetraenoate + H(+). The catalysed reaction is 1,2-dihexadecanoyl-sn-glycero-3-phosphate + H2O = 1-hexadecanoyl-sn-glycero-3-phosphate + hexadecanoate + H(+). It carries out the reaction a 1-acyl-sn-glycero-3-phosphocholine + H2O = sn-glycerol 3-phosphocholine + a fatty acid + H(+). It catalyses the reaction 1-hexadecanoyl-sn-glycero-3-phosphocholine + H2O = sn-glycerol 3-phosphocholine + hexadecanoate + H(+). The enzyme catalyses 1-(5Z,8Z,11Z,14Z-eicosatetraenoyl)-sn-glycero-3-phosphocholine + H2O = sn-glycerol 3-phosphocholine + (5Z,8Z,11Z,14Z)-eicosatetraenoate + H(+). The catalysed reaction is 2-(5Z,8Z,11Z,14Z)-eicosatetraenoyl-sn-glycero-3-phosphocholine + H2O = sn-glycerol 3-phosphocholine + (5Z,8Z,11Z,14Z)-eicosatetraenoate + H(+). It carries out the reaction 1-O-hexadecyl-2-(5Z,8Z,11Z,14Z)-eicosatetraenoyl-sn-glycero-3-phosphocholine + H2O = 1-O-hexadecyl-sn-glycero-3-phosphocholine + (5Z,8Z,11Z,14Z)-eicosatetraenoate + H(+). It catalyses the reaction 1-O-hexadecyl-2-acetyl-sn-glycero-3-phosphocholine + H2O = 1-O-hexadecyl-sn-glycero-3-phosphocholine + acetate + H(+). The enzyme catalyses hexadecanoyl-CoA + H2O = hexadecanoate + CoA + H(+). The catalysed reaction is 1',3'-bis[1,2-di-(9Z-octadecenoyl)-sn-glycero-3-phospho]-glycerol + H2O = 1'-[1,2-di-(9Z-octadecenoyl)-sn-glycero-3-phospho]-3'-[1-(9Z-octadecenoyl)-sn-glycero-3-phospho]-glycerol + (9Z)-octadecenoate + H(+). It carries out the reaction 1'-[1,2-di-(9Z-octadecenoyl)-sn-glycero-3-phospho]-3'-[1-(9Z-octadecenoyl)-sn-glycero-3-phospho]-glycerol + H2O = 1',3'-bis-[1-(9Z-octadecenoyl)-sn-glycero-3-phospho]-glycerol + (9Z)-octadecenoate + H(+). It catalyses the reaction 1',3'-bis-[1,2-di-(9Z,12Z-octadecadienoyl)-sn-glycero-3-phospho]-glycerol + H2O = 1'-[1,2-di-(9Z,12Z-octadecadienoyl)-sn-glycero-3-phospho]-3'-[1-(9Z,12Z-octadecadienoyl)-sn-glycero-3-phospho]-glycerol + (9Z,12Z)-octadecadienoate + H(+). The enzyme catalyses 1-octadecanoyl-2-(15-hydroxy-(5Z,8Z,11Z,13E)-eicosatetraenoyl)-sn-glycero-3-phosphoethanolamine + H2O = 1-octadecanoyl-sn-glycero-3-phosphoethanolamine + 15-hydroxy-(5Z,8Z,11Z,13E)-eicosatetraenoate + H(+). With respect to regulation, activated by ATP. Inhibited by calcium-activated calmodulin. Inhibited by bromoenol lactone (BEL). In terms of biological role, calcium-independent phospholipase involved in phospholipid remodeling with implications in cellular membrane homeostasis, mitochondrial integrity and signal transduction. Hydrolyzes the ester bond of the fatty acyl group attached at sn-1 or sn-2 position of phospholipids (phospholipase A1 and A2 activity respectively), producing lysophospholipids that are used in deacylation-reacylation cycles. Hydrolyzes both saturated and unsaturated long fatty acyl chains in various glycerophospholipid classes such as phosphatidylcholines, phosphatidylethanolamines and phosphatidates, with a preference for hydrolysis at sn-2 position. Can further hydrolyze lysophospholipids carrying saturated fatty acyl chains (lysophospholipase activity). Upon oxidative stress, contributes to remodeling of mitochondrial phospholipids in pancreatic beta cells, in a repair mechanism to reduce oxidized lipid content. Preferentially hydrolyzes oxidized polyunsaturated fatty acyl chains from cardiolipins, yielding monolysocardiolipins that can be reacylated with unoxidized fatty acyls to regenerate native cardiolipin species. Hydrolyzes oxidized glycerophosphoethanolamines present in pancreatic islets, releasing oxidized polyunsaturated fatty acids such as hydroxyeicosatetraenoates (HETEs). Has thioesterase activity toward fatty-acyl CoA releasing CoA-SH known to facilitate fatty acid transport and beta-oxidation in mitochondria particularly in skeletal muscle. Plays a role in regulation of membrane dynamics and homeostasis. Selectively hydrolyzes sn-2 arachidonoyl group in plasmalogen phospholipids, structural components of lipid rafts and myelin. Regulates F-actin polymerization at the pseudopods, which is required for both speed and directionality of MCP1/CCL2-induced monocyte chemotaxis. Targets membrane phospholipids to produce potent lipid signaling messengers. Generates lysophosphatidate (LPA, 1-acyl-glycerol-3-phosphate), which acts via G-protein receptors in various cell types. Has phospholipase A2 activity toward platelet-activating factor (PAF, 1-O-alkyl-2-acetyl-sn-glycero-3-phosphocholine), likely playing a role in inactivation of this potent pro-inflammatory signaling lipid. In response to glucose, amplifies calcium influx in pancreatic beta cells to promote INS secretion. The chain is 85/88 kDa calcium-independent phospholipase A2 (Pla2g6) from Rattus norvegicus (Rat).